The following is a 3421-amino-acid chain: Large tegument protein deneddylase (3421 aa).

The tract at residues 1–248 (MAQTLVPANK…SETYLSDEQY (248 aa)) is deubiquitination activity. Residues 19 to 238 (VVIGYRNQYD…ISATSLLYGI (220 aa)) form the Peptidase C76 domain. Catalysis depends on residues Cys-39, Asp-172, and His-174. Positions 311–351 (QPTEKRVSLPKRRRPPWTPPTSSENLTTSGNTHTVAGRPSQ) are disordered. The segment covering 332-344 (SSENLTTSGNTHT) has biased composition (polar residues). Positions 482-508 (LEQFITMIFNRLLSFLVENGARTRTDS) are interaction with inner tegument protein. Disordered stretches follow at residues 2407–2442 (ESNP…PTGI) and 2479–3195 (SNAM…RKNI). Low complexity predominate over residues 2415-2432 (SHDSSQSLDVPSSPSSGS). 5 stretches are compositionally biased toward pro residues: residues 2506-2516 (TLPPKAAPLPP), 2541-2556 (PSVP…PPLP), 2565-2577 (GPPP…PPLP), 2586-2598 (GPPP…PPLP), and 2607-2619 (GPPP…PPLP). Polar residues-rich tracts occupy residues 2620–2637 (QSTS…SGKT) and 2778–2787 (SDSNVTQSTK). Positions 2797-2857 (PAAAPAKSAA…SAAAPAAAPA (61 aa)) are enriched in low complexity. A compositionally biased stretch (basic and acidic residues) spans 2869-2895 (KPAKDQAKDQAKDQAKDQAKDQAKDQA). Polar residues predominate over residues 2953-2969 (LSASKNSHTTDAVSSDR). Basic and acidic residues-rich tracts occupy residues 3023-3040 (RKSD…RRAF) and 3088-3097 (CSEEPKRPTG). Residues 3120 to 3146 (IPQNQNTSESPRTTSLKSPTRTVQSSM) show a composition bias toward polar residues. Over residues 3171–3188 (PQPPPANQTPPPQEPPAP) the composition is skewed to pro residues.

This sequence belongs to the herpesviridae large tegument protein family. As to quaternary structure, interacts with host CUL1 and CUL4A; these interactions inhibit the E3 ligase activity of cullins. Interacts with inner tegument protein. Interacts with capsid vertex specific component CVC2. Interacts with the major capsid protein/MCP.

It localises to the virion tegument. The protein localises to the host cytoplasm. Its subcellular location is the host nucleus. The enzyme catalyses Thiol-dependent hydrolysis of ester, thioester, amide, peptide and isopeptide bonds formed by the C-terminal Gly of ubiquitin (a 76-residue protein attached to proteins as an intracellular targeting signal).. Functionally, large tegument protein that plays multiple roles in the viral cycle. During viral entry, remains associated with the capsid while most of the tegument is detached and participates in the capsid transport toward the host nucleus. Plays a role in the routing of the capsid at the nuclear pore complex and subsequent uncoating. Within the host nucleus, acts as a deneddylase and promotes the degradation of nuclear CRLs (cullin-RING ubiquitin ligases) and thereby stabilizes nuclear CRL substrates, while cytoplasmic CRLs remain unaffected. These modifications prevent host cell cycle S-phase progression and create a favorable environment allowing efficient viral genome replication. Participates later in the secondary envelopment of capsids. Indeed, plays a linker role for the association of the outer viral tegument to the capsids together with the inner tegument protein. The chain is Large tegument protein deneddylase from Equus caballus (Horse).